Reading from the N-terminus, the 531-residue chain is Zinc finger protein 837 (531 aa).

The tract at residues 1–101 (MEAPAQKAGQ…CGPTSSQNPE (101 aa)) is disordered. Residues 24–50 (AREKRPEEPRPLEEDRAGSRPTQKGDL) are compositionally biased toward basic and acidic residues. 8 C2H2-type zinc fingers span residues 271 to 293 (YACDECGKAFTRTSSLLQHQRIH), 299 to 321 (YECAECGKAFVRCSGLYRHQKTH), 363 to 385 (YECADCAKAFGLFSHLVEHRRVH), 391 to 413 (YACPECGKAFNQRSNLSRHQRTH), 419 to 441 (YACPLCEKAFKGRSGLVQHQRAH), 447 to 469 (YGCSECGKTFRGCSELRQHERLH), 475 to 497 (YICRDCGKAFVRNCSLVRHLRTH), and 503 to 525 (YACGDCGRAFSQRSNLNEHRKRH).

It belongs to the krueppel C2H2-type zinc-finger protein family.

It localises to the nucleus. In terms of biological role, may be involved in transcriptional regulation. The protein is Zinc finger protein 837 (ZNF837) of Homo sapiens (Human).